We begin with the raw amino-acid sequence, 381 residues long: rRNA adenine N-6-methyltransferase (381 aa).

Residues 1-19 show a composition bias toward basic and acidic residues; the sequence is MSSSDEQPRPRRRNQDRQH. Residues 1 to 42 are disordered; that stretch reads MSSSDEQPRPRRRNQDRQHPNQNRPVLGRTERDRNRRQFGQN. S-adenosyl-L-methionine contacts are provided by Asn42, Leu44, Gly69, Glu90, Asp115, and Ala131. The segment at 282-381 is disordered; it reads RLDQKNEPRG…PGRRGGPGQR (100 aa). Over residues 301–358 the composition is skewed to basic and acidic residues; that stretch reads GGRDHGDRRTGGQDRGDRRTGGRDHRDRQASGHGDRRSSGRNRDDGRTGEREQGDQGG. The span at 359–381 shows a compositional bias: gly residues; sequence RRGPSGGGRTGGRPGRRGGPGQR.

The protein belongs to the class I-like SAM-binding methyltransferase superfamily. rRNA adenine N(6)-methyltransferase family.

It carries out the reaction adenosine(2085) in 23S rRNA + 2 S-adenosyl-L-methionine = N(6)-dimethyladenosine(2085) in 23S rRNA + 2 S-adenosyl-L-homocysteine + 2 H(+). In terms of biological role, this protein produces a dimethylation of the adenine residue at position 2085 in 23S rRNA, resulting in reduced affinity between ribosomes and macrolide-lincosamide-streptogramin B antibiotics. In Saccharopolyspora erythraea (strain ATCC 11635 / DSM 40517 / JCM 4748 / NBRC 13426 / NCIMB 8594 / NRRL 2338), this protein is rRNA adenine N-6-methyltransferase (ermE).